The following is a 210-amino-acid chain: Secreted isochorismatase effector Isc1 (210 aa).

Catalysis depends on residues Asp25, Lys90, and Cys124.

This sequence belongs to the isochorismatase family.

It localises to the secreted. It is found in the host cytoplasm. Its subcellular location is the host nucleus. It carries out the reaction isochorismate + H2O = (2S,3S)-2,3-dihydroxy-2,3-dihydrobenzoate + pyruvate. Functionally, secreted isochorismatase required for full virulence of P.sojae. Suppresses salicylate-mediated innate immunity of the host by disrupting the plant salicylate metabolism pathway via hydrolysis of its isochorismate precursor. The polypeptide is Secreted isochorismatase effector Isc1 (Phytophthora sojae (strain P6497) (Soybean stem and root rot agent)).